The following is a 237-amino-acid chain: Uridylate kinase (237 aa).

12–15 (KLSG) serves as a coordination point for ATP. An involved in allosteric activation by GTP region spans residues 20 to 25 (GEDGLG). Glycine 54 lines the UMP pocket. ATP-binding residues include glycine 55 and arginine 59. UMP is bound by residues aspartate 74 and 135–142 (TGNPFFTT). Threonine 162, tyrosine 168, and aspartate 171 together coordinate ATP.

It belongs to the UMP kinase family. As to quaternary structure, homohexamer.

The protein resides in the cytoplasm. It carries out the reaction UMP + ATP = UDP + ADP. Its pathway is pyrimidine metabolism; CTP biosynthesis via de novo pathway; UDP from UMP (UMPK route): step 1/1. Its activity is regulated as follows. Allosterically activated by GTP. Inhibited by UTP. Its function is as follows. Catalyzes the reversible phosphorylation of UMP to UDP. The protein is Uridylate kinase of Haemophilus influenzae (strain PittEE).